The chain runs to 314 residues: Glycine--tRNA ligase alpha subunit (314 aa).

Belongs to the class-II aminoacyl-tRNA synthetase family. In terms of assembly, tetramer of two alpha and two beta subunits.

Its subcellular location is the cytoplasm. The catalysed reaction is tRNA(Gly) + glycine + ATP = glycyl-tRNA(Gly) + AMP + diphosphate. The chain is Glycine--tRNA ligase alpha subunit from Leuconostoc citreum (strain KM20).